The following is a 224-amino-acid chain: Type VII secretion system protein EsaE (224 aa).

As to quaternary structure, interacts with EssD.

Functionally, component of the type VII secretion system (Ess). Plays a role in Esx protein secretion. Plays an essential role in the processing and secretion of EssD. The sequence is that of Type VII secretion system protein EsaE from Staphylococcus aureus (strain USA300).